Reading from the N-terminus, the 226-residue chain is ATP synthase F(0) complex subunit a (226 aa).

The next 6 helical transmembrane spans lie at 6–26 (FASF…IVLF), 68–88 (WTLM…LGLL), 97–117 (QLSM…ITGF), 138–158 (IPML…ALAV), 164–184 (ITAG…LMSI), and 200–222 (TILE…SLYL).

Belongs to the ATPase A chain family. As to quaternary structure, component of the ATP synthase complex composed at least of ATP5F1A/subunit alpha, ATP5F1B/subunit beta, ATP5MC1/subunit c (homooctomer), MT-ATP6/subunit a, MT-ATP8/subunit 8, ATP5ME/subunit e, ATP5MF/subunit f, ATP5MG/subunit g, ATP5MK/subunit k, ATP5MJ/subunit j, ATP5F1C/subunit gamma, ATP5F1D/subunit delta, ATP5F1E/subunit epsilon, ATP5PF/subunit F6, ATP5PB/subunit b, ATP5PD/subunit d, ATP5PO/subunit OSCP. ATP synthase complex consists of a soluble F(1) head domain (subunits alpha(3) and beta(3)) - the catalytic core - and a membrane F(0) domain - the membrane proton channel (subunits c, a, 8, e, f, g, k and j). These two domains are linked by a central stalk (subunits gamma, delta, and epsilon) rotating inside the F1 region and a stationary peripheral stalk (subunits F6, b, d, and OSCP). Interacts with DNAJC30; interaction is direct.

It is found in the mitochondrion inner membrane. The catalysed reaction is H(+)(in) = H(+)(out). Subunit a, of the mitochondrial membrane ATP synthase complex (F(1)F(0) ATP synthase or Complex V) that produces ATP from ADP in the presence of a proton gradient across the membrane which is generated by electron transport complexes of the respiratory chain. ATP synthase complex consist of a soluble F(1) head domain - the catalytic core - and a membrane F(1) domain - the membrane proton channel. These two domains are linked by a central stalk rotating inside the F(1) region and a stationary peripheral stalk. During catalysis, ATP synthesis in the catalytic domain of F(1) is coupled via a rotary mechanism of the central stalk subunits to proton translocation. With the subunit c (ATP5MC1), forms the proton-conducting channel in the F(0) domain, that contains two crucial half-channels (inlet and outlet) that facilitate proton movement from the mitochondrial intermembrane space (IMS) into the matrix. Protons are taken up via the inlet half-channel and released through the outlet half-channel, following a Grotthuss mechanism. This is ATP synthase F(0) complex subunit a from Bos mutus grunniens (Wild yak).